Consider the following 584-residue polypeptide: Isopropyl malate synthase htyA (584 aa).

A Pyruvate carboxyltransferase domain is found at 39–317 (PIWLSTDLRD…ETGLDFSNLP (279 aa)).

The protein belongs to the alpha-IPM synthase/homocitrate synthase family. LeuA type 2 subfamily.

The catalysed reaction is 3-methyl-2-oxobutanoate + acetyl-CoA + H2O = (2S)-2-isopropylmalate + CoA + H(+). It functions in the pathway antifungal biosynthesis. Isopropyl malate synthase; part of the gene cluster that mediates the de novo generation of L-homotyrosine from acetyl-CoA and 4-hydroxyphenyl-pyruvate. L-homotyrosine is a building block of echinocandin B, a fungal lipidated cyclic hexapeptide that acts as an antifungal agent. L-homotyrosine 4-hydroxyphenyl-pyruvate first undergoes an aldol-type condensation by htyA with the C-2 of acetyl-CoA followed by the release of CoA to form 2-(4-hydroxybenzyl)-malate. This is followed by isomerization of 2-(4-hydroxy-benzyl)-malate to 3-(4-hydroxybenzyl)-malate by htyD. Thereafter, 3-(4-hydroxybenzyl)-malate undergoes decarboxylation and oxidation to form 2-oxo-4-(4-hydroxybenzyl)butanoic acid, coupled to reduction of NAD(+) to NADH by htyC. The product then undergoes transamination catalyzed by htyB to form L-homotyrosine. This chain is Isopropyl malate synthase htyA, found in Aspergillus rugulosus (Emericella rugulosa).